Here is a 556-residue protein sequence, read N- to C-terminus: 2-succinyl-5-enolpyruvyl-6-hydroxy-3-cyclohexene-1-carboxylate synthase (556 aa).

The protein belongs to the TPP enzyme family. MenD subfamily. In terms of assembly, homodimer. Mg(2+) serves as cofactor. Requires Mn(2+) as cofactor. Thiamine diphosphate is required as a cofactor.

It catalyses the reaction isochorismate + 2-oxoglutarate + H(+) = 5-enolpyruvoyl-6-hydroxy-2-succinyl-cyclohex-3-ene-1-carboxylate + CO2. The protein operates within quinol/quinone metabolism; 1,4-dihydroxy-2-naphthoate biosynthesis; 1,4-dihydroxy-2-naphthoate from chorismate: step 2/7. It participates in quinol/quinone metabolism; menaquinone biosynthesis. In terms of biological role, catalyzes the thiamine diphosphate-dependent decarboxylation of 2-oxoglutarate and the subsequent addition of the resulting succinic semialdehyde-thiamine pyrophosphate anion to isochorismate to yield 2-succinyl-5-enolpyruvyl-6-hydroxy-3-cyclohexene-1-carboxylate (SEPHCHC). This chain is 2-succinyl-5-enolpyruvyl-6-hydroxy-3-cyclohexene-1-carboxylate synthase, found in Klebsiella pneumoniae subsp. pneumoniae (strain ATCC 700721 / MGH 78578).